Consider the following 144-residue polypeptide: MVKVFFVLAVLSSIISYINIDPMKSSFFLIFSLLFSMPVISMSMHIWFSYFICLLFLSGIFVILVYFSSLSKINVVKSYMAVFLLLLSMLYFSPTVLTYSSYLGLSGFYYSIYWFIFCFILVCLLFFMNFSSYFLNFSGALRKV.

5 helical membrane-spanning segments follow: residues Met1–Asp21, Ser25–His45, Ile46–Tyr66, Tyr79–Tyr99, and Phe108–Met128.

Belongs to the complex I subunit 6 family.

Its subcellular location is the mitochondrion membrane. It carries out the reaction a ubiquinone + NADH + 5 H(+)(in) = a ubiquinol + NAD(+) + 4 H(+)(out). Functionally, core subunit of the mitochondrial membrane respiratory chain NADH dehydrogenase (Complex I) that is believed to belong to the minimal assembly required for catalysis. Complex I functions in the transfer of electrons from NADH to the respiratory chain. The immediate electron acceptor for the enzyme is believed to be ubiquinone. The protein is NADH-ubiquinone oxidoreductase chain 6 of Caenorhabditis elegans.